A 565-amino-acid chain; its full sequence is Adenine deaminase (565 aa).

It belongs to the metallo-dependent hydrolases superfamily. Adenine deaminase family. Mn(2+) serves as cofactor.

The catalysed reaction is adenine + H2O + H(+) = hypoxanthine + NH4(+). In Cereibacter sphaeroides (strain ATCC 17023 / DSM 158 / JCM 6121 / CCUG 31486 / LMG 2827 / NBRC 12203 / NCIMB 8253 / ATH 2.4.1.) (Rhodobacter sphaeroides), this protein is Adenine deaminase.